The primary structure comprises 327 residues: MPHLAELVANAKAAVEDAQDVAALDLVRVEYLGKKGHFTLQMQSLRDVPAEDRPAAGAVINQAKQAVQEALNARKNALESAALNERLAAETIDVSLPGRRMENGGLHPVTRTIDRIEAFFGELGFSVETGPEIEDDYHNFDALNIPGHHPARADHDTFWFDATRLLRTQTSGVQIRTMKEQQPPIRIIAPGRVYRNDYDQTHTPMFHQMEGLIVDKDISFTNLKGTLHDFLNNFFEEDLQVRFRPSYFPFTEPSAEVDVMGKNGKWLEVLGCGMVHPNVLRNVGIDPEVYSGFAFGMGMERLTMLRYGVTDLRAFFENDLRFLKQFK.

Glutamate 252 is a Mg(2+) binding site.

It belongs to the class-II aminoacyl-tRNA synthetase family. Phe-tRNA synthetase alpha subunit type 1 subfamily. In terms of assembly, tetramer of two alpha and two beta subunits. Mg(2+) serves as cofactor.

It is found in the cytoplasm. The enzyme catalyses tRNA(Phe) + L-phenylalanine + ATP = L-phenylalanyl-tRNA(Phe) + AMP + diphosphate + H(+). This is Phenylalanine--tRNA ligase alpha subunit from Serratia proteamaculans (strain 568).